Consider the following 523-residue polypeptide: Amino acid transporter protein 6 (523 aa).

Residues 1-19 (MLNVFGVSASMPDDSRSQK) are Cytoplasmic-facing. A helical transmembrane segment spans residues 20–40 (MGLLGAISYIVGNIVGSGIFI). The Extracellular portion of the chain corresponds to 41–51 (TPTSIIENVNS). Residues 52–72 (VGLSLAIWILAAFISMLGSFC) form a helical membrane-spanning segment. Over 73-86 (YVELGTSIRLSGGD) the chain is Cytoplasmic. The chain crosses the membrane as a helical span at residues 87–107 (FAYLCFMKWYPVAFAFMCIGC). The Extracellular segment spans residues 108–145 (TINYPATLAVQAQTFAEYVFRGAGVELDETSEFWAKKL). A helical transmembrane segment spans residues 146–166 (LGFSLIILLMFMNFFSLKTFV). Residues 167 to 173 (QRFSILA) are Cytoplasmic-facing. A helical transmembrane segment spans residues 174–194 (SLAKIAATLLIIITGFYYLIF). Residues 195 to 214 (KHWKQNLEEPFKGSNWNPGP) are Extracellular-facing. Residues 215–235 (FVNALFAGLFSYDGWDILNFG) traverse the membrane as a helical segment. Residues 236 to 249 (AEEIENPKRTMPLS) are Cytoplasmic-facing. The chain crosses the membrane as a helical span at residues 250–270 (IIIGMTCIGVIYVAVNVAYSI). Over 271-290 (VLSPTEMIASNAVAIDFANK) the chain is Extracellular. Asn-289 carries an N-linked (GlcNAc...) asparagine glycan. The chain crosses the membrane as a helical span at residues 291 to 311 (TLGAAAFVVPVMVAILLIGSL). Over 312-348 (NSTMFSASRYLQAVSRQGHIPSAISGIAPNCDSPRVA) the chain is Cytoplasmic. Residues 349-369 (LLVHILIAIAVSFLGDPDKLI) form a helical membrane-spanning segment. Topologically, residues 370 to 404 (NYVAFAQWSQRAFTMSALLYLRIRGRPRHPDRIQL) are extracellular. A helical transmembrane segment spans residues 405–425 (PIIMPILFFLVCTSMVVISII). Residues 426-429 (DDFK) lie on the Cytoplasmic side of the membrane. A helical membrane pass occupies residues 430-450 (SSAVGLGILLGGLIIFIIFVW). Residues 451–523 (DRALPSSHTF…GNGQFKCTRM (73 aa)) lie on the Extracellular side of the membrane. Asn-462 is a glycosylation site (N-linked (GlcNAc...) asparagine). The PDZ-binding motif motif lies at 521–523 (TRM).

It belongs to the amino acid-polyamine-organocation (APC) superfamily. In terms of assembly, interacts (via PDZ-binding motif) with nfrl-1 (via PDZ 2 domain); the interaction with nrfl-1 is required to sequester aat-6 to the apical cell membrane of intestinal cells. As to expression, expressed at the apical cell membrane of intestinal cells.

It is found in the apical cell membrane. Its function is as follows. Amino acid transporter that mediates the uptake of the L-enantiomers of various amino acids, including L-glutamate. May play a role in promoting fertility. The polypeptide is Amino acid transporter protein 6 (Caenorhabditis elegans).